A 239-amino-acid chain; its full sequence is Large ribosomal subunit protein uL2 (239 aa).

The interval 203–239 (PFGGKEHHPGKPTTTSRRAPPGRKVGHIAARRTGRRK) is disordered. Residues 222–239 (PPGRKVGHIAARRTGRRK) are compositionally biased toward basic residues.

Belongs to the universal ribosomal protein uL2 family. In terms of assembly, part of the 50S ribosomal subunit. Forms a bridge to the 30S subunit in the 70S ribosome.

In terms of biological role, one of the primary rRNA binding proteins. Required for association of the 30S and 50S subunits to form the 70S ribosome, for tRNA binding and peptide bond formation. It has been suggested to have peptidyltransferase activity; this is somewhat controversial. Makes several contacts with the 16S rRNA in the 70S ribosome. The protein is Large ribosomal subunit protein uL2 of Pyrococcus abyssi (strain GE5 / Orsay).